The chain runs to 151 residues: Protein ECM12 (151 aa).

N-linked (GlcNAc...) asparagine glycosylation occurs at Asn-2. The next 2 membrane-spanning stretches (helical) occupy residues 17–37 and 51–71; these read LLVF…IFFF and AFLA…VGFF. N-linked (GlcNAc...) asparagine glycosylation is found at Asn-132 and Asn-137.

It localises to the membrane. May be involved in cell wall organization and biogenesis. This Saccharomyces cerevisiae (strain ATCC 204508 / S288c) (Baker's yeast) protein is Protein ECM12 (ECM12).